We begin with the raw amino-acid sequence, 225 residues long: Ethylene-responsive transcription factor 3 (225 aa).

The span at Met-1–Pro-12 shows a compositional bias: low complexity. 2 disordered regions span residues Met-1–Arg-29 and Asn-82–Ser-193. The AP2/ERF DNA-binding region spans Arg-27–Pro-84. The segment covering Ser-118–Ser-134 has biased composition (low complexity). The segment covering Asp-176 to Asp-185 has biased composition (basic and acidic residues). Positions Phe-202 to Pro-208 match the EAR-like (transcriptional repression) motif.

This sequence belongs to the ethylene-response factor family. Class 2 subfamily.

Its subcellular location is the nucleus. Functionally, transcription factor that binds to the GCC-box pathogenesis-related promoter element. Involved in the regulation of gene expression by stress factors and by components of stress signal transduction pathways. Probably acts as a transcriptional repressor and may regulate other AtERFs. In Nicotiana tabacum (Common tobacco), this protein is Ethylene-responsive transcription factor 3 (ERF3).